The chain runs to 256 residues: Isoprenyl transferase (256 aa).

Asp-33 is an active-site residue. A Mg(2+)-binding site is contributed by Asp-33. Residues 34 to 37, Trp-38, Arg-46, His-50, and 78 to 80 contribute to the substrate site; these read GNGR and STE. Asn-81 acts as the Proton acceptor in catalysis. Residues Trp-82, Arg-84, Arg-201, and 207 to 209 each bind substrate; that span reads RIS. Glu-220 serves as a coordination point for Mg(2+).

Belongs to the UPP synthase family. Homodimer. The cofactor is Mg(2+).

In terms of biological role, catalyzes the condensation of isopentenyl diphosphate (IPP) with allylic pyrophosphates generating different type of terpenoids. The chain is Isoprenyl transferase from Staphylococcus epidermidis (strain ATCC 35984 / DSM 28319 / BCRC 17069 / CCUG 31568 / BM 3577 / RP62A).